Reading from the N-terminus, the 388-residue chain is Chaperone protein DnaJ (388 aa).

The 66-residue stretch at 6 to 71 (DYYEILGVPR…EKRKLYDQFG (66 aa)) folds into the J domain. The segment at 147 to 229 (GCEKEIPIYR…CGGTGNVRRQ (83 aa)) adopts a CR-type zinc-finger fold. The Zn(2+) site is built by Cys160, Cys163, Cys177, Cys180, Cys203, Cys206, Cys217, and Cys220. 4 CXXCXGXG motif repeats span residues 160-167 (CSVCGGSG), 177-184 (CQKCGGTG), 203-210 (CDACGGTG), and 217-224 (CRECGGTG).

The protein belongs to the DnaJ family. Homodimer. Zn(2+) is required as a cofactor.

It localises to the cytoplasm. Functionally, participates actively in the response to hyperosmotic and heat shock by preventing the aggregation of stress-denatured proteins and by disaggregating proteins, also in an autonomous, DnaK-independent fashion. Unfolded proteins bind initially to DnaJ; upon interaction with the DnaJ-bound protein, DnaK hydrolyzes its bound ATP, resulting in the formation of a stable complex. GrpE releases ADP from DnaK; ATP binding to DnaK triggers the release of the substrate protein, thus completing the reaction cycle. Several rounds of ATP-dependent interactions between DnaJ, DnaK and GrpE are required for fully efficient folding. Also involved, together with DnaK and GrpE, in the DNA replication of plasmids through activation of initiation proteins. The sequence is that of Chaperone protein DnaJ from Caldicellulosiruptor bescii (strain ATCC BAA-1888 / DSM 6725 / KCTC 15123 / Z-1320) (Anaerocellum thermophilum).